The primary structure comprises 252 residues: 2-succinyl-6-hydroxy-2,4-cyclohexadiene-1-carboxylate synthase (252 aa).

The protein belongs to the AB hydrolase superfamily. MenH family. In terms of assembly, monomer.

The catalysed reaction is 5-enolpyruvoyl-6-hydroxy-2-succinyl-cyclohex-3-ene-1-carboxylate = (1R,6R)-6-hydroxy-2-succinyl-cyclohexa-2,4-diene-1-carboxylate + pyruvate. Its pathway is quinol/quinone metabolism; 1,4-dihydroxy-2-naphthoate biosynthesis; 1,4-dihydroxy-2-naphthoate from chorismate: step 3/7. It participates in quinol/quinone metabolism; menaquinone biosynthesis. Catalyzes a proton abstraction reaction that results in 2,5-elimination of pyruvate from 2-succinyl-5-enolpyruvyl-6-hydroxy-3-cyclohexene-1-carboxylate (SEPHCHC) and the formation of 2-succinyl-6-hydroxy-2,4-cyclohexadiene-1-carboxylate (SHCHC). The protein is 2-succinyl-6-hydroxy-2,4-cyclohexadiene-1-carboxylate synthase of Shigella sonnei (strain Ss046).